The primary structure comprises 231 residues: DNA mismatch repair protein MutH (231 aa).

Belongs to the MutH family.

It is found in the cytoplasm. In terms of biological role, sequence-specific endonuclease that cleaves unmethylated GATC sequences. It is involved in DNA mismatch repair. The sequence is that of DNA mismatch repair protein MutH from Pectobacterium atrosepticum (strain SCRI 1043 / ATCC BAA-672) (Erwinia carotovora subsp. atroseptica).